The following is a 317-amino-acid chain: Beta-ketoacyl-[acyl-carrier-protein] synthase III (317 aa).

Active-site residues include Cys-112 and His-244. The ACP-binding stretch occupies residues 245 to 249; that stretch reads QANIR. Asn-274 is an active-site residue.

It belongs to the thiolase-like superfamily. FabH family. As to quaternary structure, homodimer.

It is found in the cytoplasm. The catalysed reaction is malonyl-[ACP] + acetyl-CoA + H(+) = 3-oxobutanoyl-[ACP] + CO2 + CoA. It functions in the pathway lipid metabolism; fatty acid biosynthesis. In terms of biological role, catalyzes the condensation reaction of fatty acid synthesis by the addition to an acyl acceptor of two carbons from malonyl-ACP. Catalyzes the first condensation reaction which initiates fatty acid synthesis and may therefore play a role in governing the total rate of fatty acid production. Possesses both acetoacetyl-ACP synthase and acetyl transacylase activities. Its substrate specificity determines the biosynthesis of branched-chain and/or straight-chain of fatty acids. This Rickettsia prowazekii (strain Madrid E) protein is Beta-ketoacyl-[acyl-carrier-protein] synthase III.